The sequence spans 65 residues: Disintegrin CC5 (65 aa).

Residues Met1–Ser65 enclose the Disintegrin domain. Disulfide bonds link Cys7-Cys30, Cys21-Cys27, Cys26-Cys51, and Cys39-Cys58. Residues Arg43 to Asp45 carry the Cell attachment site motif.

This sequence belongs to the disintegrin family. Dimeric disintegrin subfamily. In terms of assembly, homodimer; disulfide-linked. As to expression, expressed by the venom gland.

It is found in the secreted. Binds and inhibits integrins alpha-IIb/beta-3 (ITGA2B/ITGB3), alpha-V/beta-3 (ITGAV/ITGB3) and alpha-5/beta-1 (ITGA5/ITGB1). This is Disintegrin CC5 from Cerastes cerastes (Horned desert viper).